Consider the following 422-residue polypeptide: Zinc finger protein Gfi-1 (422 aa).

The interval M1–S20 is SNAG domain. The segment at M1–L109 is disordered. Phosphoserine occurs at positions 20 and 56. The segment at R140–C257 is required for interaction with RELA. 6 C2H2-type zinc fingers span residues Y255–H278, F284–H306, F312–H334, Y340–H362, H368–H390, and F396–H419.

As to quaternary structure, interacts with U2AF1L4. Component of RCOR-GFI-KDM1A-HDAC complexes. Interacts directly with RCOR1, KDM1A and HDAC2. Also interacts with HDAC1. Interacts (via the zinc-finger domain) with ARIH2; the interaction prevents GFI1 ubiquitination and proteasomal degradation. Interacts with PIAS3; the interaction relieves the inhibitory effect of PIAS3 on STAT3-mediated transcriptional activity. Forms a complex with EHMT2 and HDAC1 to promote 'Lys-9' dimethylation of H3 (H3K9Me2) and repress expression of target genes. Interacts directly with EHMT2. Component of the GFI1-AJUBA-HDAC1 repressor complex. Interacts directly with AJUBA (via ITS LIM domains); the interaction results in the HDAC-dependent corepression of a subset of GFI1 target genes and, occurs independently of the SNAG domain. Interacts with SPI1; the interaction inhibits SPI1 transcriptional activity targeted at macrophage-specific genes, repressing macrophage differentiation of myeloid progenitor cells and promoting granulocyte commitment. Interacts with RUNX1T1; the interaction represses HDAC-mediated transcriptional activity. Interacts with RELA; the interaction occurs on liposaccharide (LPS) stimulation and controls RELA DNA binding activity and regulates endotoxin-mediated TOLL-like receptor inflammatory response. Interacts (via the C-terminal zinc fingers) with ZBTB17; the interaction results in the recruitment of GFI1 to the CDKN1A/p21 and CDKN1B promoters and repression of transcription. Ubiquitinated. Ubiquitination and degradation by the proteasome is inhibited by the ubiquitin ligase, ARIH2.

It localises to the nucleus. Functionally, transcription repressor essential for hematopoiesis. Functions in a cell-context and development-specific manner. Binds to 5'-TAAATCAC[AT]GCA-3' in the promoter region of a large number of genes. Component of several complexes, including the EHMT2-GFI1-HDAC1, AJUBA-GFI1-HDAC1 and RCOR-GFI-KDM1A-HDAC complexes, that suppress, via histone deacetylase (HDAC) recruitment, a number of genes implicated in multilineage blood cell development. Regulates neutrophil differentiation, promotes proliferation of lymphoid cells, and is required for granulocyte development. Inhibits SPI1 transcriptional activity at macrophage-specific genes, repressing macrophage differentiation of myeloid progenitor cells and promoting granulocyte commitment. Mediates, together with U2AF1L4, the alternative splicing of CD45 and controls T-cell receptor signaling. Regulates the endotoxin-mediated Toll-like receptor (TLR) inflammatory response by antagonizing RELA. Cooperates with CBFA2T2 to regulate ITGB1-dependent neurite growth. Controls cell-cycle progression by repressing CDKNIA/p21 transcription in response to TGFB1 via recruitment of GFI1 by ZBTB17 to the CDKNIA/p21 and CDKNIB promoters. Required for the maintenance of inner ear hair cells. In addition to its role in transcription, acts as a substrate adapter for PRMT1 in the DNA damage response: facilitates the recognition of TP53BP1 and MRE11 substrates by PRMT1, promoting their methylation and the DNA damage response. The protein is Zinc finger protein Gfi-1 (GFI1) of Homo sapiens (Human).